A 264-amino-acid chain; its full sequence is Stress response regulator protein 1 (264 aa).

The tract at residues isoleucine 50–threonine 74 is disordered. The span at aspartate 62–threonine 74 shows a compositional bias: acidic residues. The Response regulatory domain maps to arginine 138 to aspartate 256. Aspartate 189 is subject to 4-aspartylphosphate.

Its function is as follows. Required for stress adaptation, morphogenesis and virulence. The protein is Stress response regulator protein 1 (SRR1) of Candida tropicalis (strain ATCC MYA-3404 / T1) (Yeast).